A 430-amino-acid polypeptide reads, in one-letter code: MTRSEALFEQAKKTIPGGVNSPVRAFNGVGGSPLFIEKADGAYIYDADGKAYIDYVGSWGPMILGHNHPKIREAVLAAVHNGLSFGAPTELEVQMAEKVIAMVPSIEQVRMVSSGTEATMSAIRLARGFTNRDKILKFEGCYHGHADCLLVKAGSGALTLGQPSSPGIPEDFAKHTLTAVYNDLDSVRTLFEQYPIEIACIIIEPVAGNMNCIPPIPGFLEGLRTMCDEFGALLIIDEVMTGFRVSRSGAQGHYGVTPDLTTLGKVIGGGMPVGAFGGRKDVMQFIAPTGPVYQAGTLSGNPIAMSAGLAQMEALCEEGLYEALSAKTKRIAEGFKAAADKHGIPMAINYVGGMFGFFFTEQEQITRFDQVTKCNIEHFRTFYHGMLDEGVYLAPSAYEAGFLSMAHGEEELRLTLEAADRVLARMKAAM.

Lysine 265 carries the post-translational modification N6-(pyridoxal phosphate)lysine.

This sequence belongs to the class-III pyridoxal-phosphate-dependent aminotransferase family. HemL subfamily. In terms of assembly, homodimer. Pyridoxal 5'-phosphate is required as a cofactor.

It is found in the cytoplasm. The catalysed reaction is (S)-4-amino-5-oxopentanoate = 5-aminolevulinate. Its pathway is porphyrin-containing compound metabolism; protoporphyrin-IX biosynthesis; 5-aminolevulinate from L-glutamyl-tRNA(Glu): step 2/2. The sequence is that of Glutamate-1-semialdehyde 2,1-aminomutase from Shewanella sp. (strain MR-4).